The chain runs to 395 residues: ATP-dependent RNA helicase eIF4A (395 aa).

Ser2 bears the N-acetylserine mark. The Q motif motif lies at 22 to 50 (YKFDDMELDENLLRGVFGYGFEEPSAIQQ). The Helicase ATP-binding domain maps to 53 to 222 (IMPIIEGHDV…TKFMRNPVRI (170 aa)). Residue 66-73 (AQSGTGKT) coordinates ATP. Phosphothreonine is present on Thr73. Ser77 and Ser129 each carry phosphoserine. Thr146 is modified (phosphothreonine). The DEAD box signature appears at 170-173 (DEAD). A Helicase C-terminal domain is found at 233–394 (GIKQFYVNVE…ELPSDIATLL (162 aa)).

This sequence belongs to the DEAD box helicase family. eIF4A subfamily. As to quaternary structure, component of the eIF4F complex, which composition varies with external and internal environmental conditions. It is composed of at least eIF4A, eIF4E and eIF4G.

It is found in the cytoplasm. The catalysed reaction is ATP + H2O = ADP + phosphate + H(+). Functionally, ATP-dependent RNA helicase which is a subunit of the eIF4F complex involved in cap recognition and is required for mRNA binding to ribosome. In the current model of translation initiation, eIF4A unwinds RNA secondary structures in the 5'-UTR of mRNAs which is necessary to allow efficient binding of the small ribosomal subunit, and subsequent scanning for the initiator codon. In Saccharomyces cerevisiae (strain YJM789) (Baker's yeast), this protein is ATP-dependent RNA helicase eIF4A (TIF1).